The primary structure comprises 58 residues: Metallothionein (58 aa).

Residues 1–29 (MPDPCCIDKCECKEGGCKAGCKCTSCRCT) form a beta region. The a divalent metal cation site is built by Cys5, Cys6, Cys10, Cys12, Cys17, Cys21, Cys23, Cys26, Cys28, Cys31, Cys34, Cys38, Cys40, Cys46, Cys50, Cys54, Cys56, and Cys57. The segment at 30-58 (PCEKCSSGCKCTTKEDCCKTCTKPCSCCP) is alpha.

The protein belongs to the metallothionein superfamily. Type 3 family.

Metallothioneins have a high content of cysteine residues that bind various heavy metals. Class I MTS in marine crustacea are involved in the sequestration of elevated levels of heavy-metal ions. The chain is Metallothionein from Carcinus maenas (Common shore crab).